Consider the following 542-residue polypeptide: MAAATAAVFALLMASALAGAAAGGDIVHHDDEAPKIPGCSNDFILVKVQSWVNGKEDDEYVGVGARFGPQIVSKEKHANRTRLMLADPIDCCTSPKEKVSGDILLVQRGKCKFTKKAKFAEAAGASGIIIINHVHELYKMVCEKNETDLDINIPAVLLPRDAGFALHTVLTSGNSVSVQQYSPDRPVVDTAEVFLWLMAVGTVLCASYWSAWSAREALCEQEKLLKDGREVLLNVENGSSSGMIDINVASAIMFVVVASCFLIMLYKMMSSWFVELLVVIFCVGGVEGLQTCLVALLSRWFRAASESFFKVPFFGAVSYLTLAVSPFCIVFAVLWAVHRHFTYAWIGQDILGIALIITVIQIVRVPNLKVGSVLLSCAFFYDIFWVFVSKRWFHESVMIVVARGDKTDEDGVPMLLKIPRMFDPWGGYSIIGFGDILLPGLLVAFALRYDWAAKKSLQTGYFLWSMVAYGSGLLITYVALNLMDGHGQPALLYIVPFTLGALISLGWKRGELWNLWSKGEPERVCPHHMHMQPQPKTPPLVQ.

The signal sequence occupies residues 1-23 (MAAATAAVFALLMASALAGAAAG). Residues 24–192 (GDIVHHDDEA…PDRPVVDTAE (169 aa)) lie on the Lumenal side of the membrane. Residues Asn-79 and Asn-145 are each glycosylated (N-linked (GlcNAc...) asparagine). Positions 92-167 (CTSPKEKVSG…LPRDAGFALH (76 aa)) constitute a PA domain. Residues 193 to 213 (VFLWLMAVGTVLCASYWSAWS) traverse the membrane as a helical segment. At 214–245 (AREALCEQEKLLKDGREVLLNVENGSSSGMID) the chain is on the cytoplasmic side. The helical transmembrane segment at 246–266 (INVASAIMFVVVASCFLIMLY) threads the bilayer. The Lumenal segment spans residues 267 to 275 (KMMSSWFVE). The chain crosses the membrane as a helical span at residues 276–296 (LLVVIFCVGGVEGLQTCLVAL). Topologically, residues 297–316 (LSRWFRAASESFFKVPFFGA) are cytoplasmic. A helical transmembrane segment spans residues 317-337 (VSYLTLAVSPFCIVFAVLWAV). Residues 338–342 (HRHFT) lie on the Lumenal side of the membrane. Residues 343–363 (YAWIGQDILGIALIITVIQIV) traverse the membrane as a helical segment. Topologically, residues 364–367 (RVPN) are cytoplasmic. Residues 368-388 (LKVGSVLLSCAFFYDIFWVFV) traverse the membrane as a helical segment. Asp-382 is a catalytic residue. The Lumenal portion of the chain corresponds to 389-426 (SKRWFHESVMIVVARGDKTDEDGVPMLLKIPRMFDPWG). A helical transmembrane segment spans residues 427 to 447 (GYSIIGFGDILLPGLLVAFAL). Asp-435 is an active-site residue. At 448-459 (RYDWAAKKSLQT) the chain is on the cytoplasmic side. Residues 460-480 (GYFLWSMVAYGSGLLITYVAL) traverse the membrane as a helical segment. The Lumenal portion of the chain corresponds to 481 to 486 (NLMDGH). The helical transmembrane segment at 487-507 (GQPALLYIVPFTLGALISLGW) threads the bilayer. Residues 489 to 491 (PAL) carry the PAL motif. The Cytoplasmic portion of the chain corresponds to 508 to 542 (KRGELWNLWSKGEPERVCPHHMHMQPQPKTPPLVQ).

It belongs to the peptidase A22B family. Post-translationally, glycosylated.

The protein resides in the endosome membrane. Its function is as follows. Intramembrane-cleaving aspartic protease (I-CLiP) that cleaves type II membrane signal peptides in the hydrophobic plane of the membrane. This is Signal peptide peptidase-like 5 (SPPL5) from Oryza sativa subsp. japonica (Rice).